The following is an 85-amino-acid chain: Conotoxin MaIr94 (85 aa).

An N-terminal signal peptide occupies residues 1 to 22; that stretch reads MKLTCVLIITVLFLTACQLTAA. A propeptide spanning residues 23–49 is cleaved from the precursor; the sequence is GNSRDKQEDPVVRSSGEVQRSEDIKLA. 3 cysteine pairs are disulfide-bonded: Cys52–Cys69, Cys59–Cys73, and Cys68–Cys84.

This sequence belongs to the conotoxin O1 superfamily. As to expression, expressed by the venom duct.

The protein localises to the secreted. Functionally, produces no obvious effect on ionic currents when tested on the mouse dorsal rooted ganglia (DRG). The polypeptide is Conotoxin MaIr94 (Conus marmoreus (Marble cone)).